A 313-amino-acid chain; its full sequence is Protein OPG185 (313 aa).

The first 16 residues, Met-1–Ser-16, serve as a signal peptide directing secretion. Topologically, residues Thr-17–Lys-277 are virion surface. An Ig-like V-type domain is found at Pro-18–Tyr-121. A disulfide bond links Cys-36 and Cys-105. Residues Asn-71, Asn-114, Asn-163, Asn-182, and Asn-262 are each glycosylated (N-linked (GlcNAc...) asparagine; by host). Residues Val-278–Asn-301 traverse the membrane as a helical segment. At Lys-302 to Val-313 the chain is on the intravirion side.

This sequence belongs to the orthopoxvirus OPG185 family. In terms of assembly, heterodimerizes with OPG040. The heterodimer OPG185-OPG040 interacts with components of the entry fusion complex OPG143 and OPG094. Heterodimer with C3/VPC protein; disulfide-linked. Post-translationally, glycosylated; contains phosphate and sulfate-substituted glycans. O-glycosylation is required for hemagglutination and hemadsorption activities of infected cell membranes.

The protein localises to the virion membrane. It is found in the host membrane. Functionally, prevents cell to cell fusion by interacting with and directing the viral OPG040 protein on the host plasma membrane. The OPG185-OPG040 complex associates with components of the entry fusion complex (EFC) presumably to avoid superinfection and syncytium formation. Via its interaction with C3/VCP protein, protects the infected cell and probably also the extracellular enveloped virus from complement attack. This is Protein OPG185 (OPG185) from Homo sapiens (Human).